The primary structure comprises 237 residues: Ribonuclease PH (237 aa).

Phosphate-binding positions include Arg-86 and 124–126 (GTR).

Belongs to the RNase PH family. As to quaternary structure, homohexameric ring arranged as a trimer of dimers.

It carries out the reaction tRNA(n+1) + phosphate = tRNA(n) + a ribonucleoside 5'-diphosphate. In terms of biological role, phosphorolytic 3'-5' exoribonuclease that plays an important role in tRNA 3'-end maturation. Removes nucleotide residues following the 3'-CCA terminus of tRNAs; can also add nucleotides to the ends of RNA molecules by using nucleoside diphosphates as substrates, but this may not be physiologically important. Probably plays a role in initiation of 16S rRNA degradation (leading to ribosome degradation) during starvation. This is Ribonuclease PH from Methylobacterium radiotolerans (strain ATCC 27329 / DSM 1819 / JCM 2831 / NBRC 15690 / NCIMB 10815 / 0-1).